Here is a 272-residue protein sequence, read N- to C-terminus: Homeobox protein SIX3 (272 aa).

A DNA-binding region (homeobox) is located at residues 169–228 (GEQKTHCFKERTRGLLREWYLQDPYPNPGKKRELAHATGLTPTQVGNWFKNRRQRDRAAA). Residues 244–272 (CTLSGGDSSERADGDTFLSVTDSDSDLDV) are disordered.

The protein belongs to the SIX/Sine oculis homeobox family. As to quaternary structure, interacts with GMNN.

The protein localises to the nucleus. Its function is as follows. Transcriptional regulator which can act as both a transcriptional repressor and activator by binding a ATTA homeodomain core recognition sequence on these target genes. During forebrain development represses WNT1 expression allowing zona limitans intrathalamica formation and thereby ensuring proper anterio-posterior patterning of the diencephalon and formation of the rostral diencephalon. Acts as a direct upstream activator of SHH expression in the rostral diencephalon ventral midline and that in turn SHH maintains its expression. In addition, Six3 activity is required for the formation of the telencephalon. During postnatal stages of brain development is necessary for ependymal cell maturation by promoting the maturation of radial glia into ependymal cells through regulation of neuroblast proliferation and migration. Acts on the proliferation and differentiation of neural progenitor cells through activating transcription of CCND1 and CCND2. During early lens formation plays a role in lens induction and specification by activating directly PAX6 in the presumptive lens ectoderm. In turn PAX6 activates SIX3 resulting in activation of PDGFRA and CCND1 promoting cell proliferation. Also is required for the neuroretina development by directly suppressing WNT8B expression in the anterior neural plate territory. Its action during retina development and lens morphogenesis is AES and TLE4-dependent manner. Furthermore, during eye development regulates several genes expression. Before and during early lens development represses the CRYGF promoter by binding a SIX repressor element. Directly activates RHO transcription, or cooperates with CRX or NRL. Six3 also functions in the formation of the proximodistal axis of the optic cup, and promotes the formation of optic vesicles-like structures. During pituitary development, acts in parallel or alternatively with HESX1 to control cell proliferation through Wnt/beta-catenin pathway. Plays a role in eye development by suppressing WNT1 expression and in dorsal-ventral patterning by repressing BMP signaling pathway. The chain is Homeobox protein SIX3 (six3) from Oryzias latipes (Japanese rice fish).